The following is a 381-amino-acid chain: 2-methylcitrate synthase 1 (381 aa).

H192 is a substrate binding site. H227 is an active-site residue. CoA is bound at residue 260-264 (RIMGF). H266 is a catalytic residue. Position 275 (R275) interacts with substrate. The active site involves D317. Residues R342 and R361 each coordinate substrate.

It belongs to the citrate synthase family. Homodimer.

It carries out the reaction propanoyl-CoA + oxaloacetate + H2O = (2S,3S)-2-methylcitrate + CoA + H(+). The catalysed reaction is oxaloacetate + acetyl-CoA + H2O = citrate + CoA + H(+). It participates in carbohydrate metabolism; tricarboxylic acid cycle. Functionally, catalyzes the Claisen condensation of propionyl-CoA and oxaloacetate (OAA) to yield 2-methylcitrate (2-MC) and CoA. Also catalyzes the condensation of oxaloacetate with propionyl-CoA but with a lower specificity. The protein is 2-methylcitrate synthase 1 (prpC1) of Corynebacterium glutamicum (strain ATCC 13032 / DSM 20300 / JCM 1318 / BCRC 11384 / CCUG 27702 / LMG 3730 / NBRC 12168 / NCIMB 10025 / NRRL B-2784 / 534).